The chain runs to 307 residues: MSMDIVERINKLKEEKNAVILAHNYQPKEIQKIADFLGDSLELCIKAKETDADIIVFCGVDFMGESAKILNPEKKVLMPEIEGTQCPMAHQLPPEIIKKYRELYPEAPLVVYVNTTAETKALADITCTSANADRVVNSLDADTVLFGPDNNLAYYVQKRTDKKVIAIPEGGGCYVHKKFTIDDLKRVKSKYPNAKVLIHPECSPELQDNADYIASTSGILRIVLESDDEEFIIGTEVGMINRLEIELEKLGKKKTLIPLRKDAICHEMKRITLEKIEKCLLEERYEIKLEKEIIEKAQKAIERMLRI.

Iminosuccinate-binding residues include His23 and Ser40. Cys86 serves as a coordination point for [4Fe-4S] cluster. Residues 112–114 and Ser129 contribute to the iminosuccinate site; that span reads YVN. Cys173 is a [4Fe-4S] cluster binding site. Iminosuccinate-binding positions include 199-201 and Thr216; that span reads HPE. Cys265 is a binding site for [4Fe-4S] cluster.

The protein belongs to the quinolinate synthase family. Type 2 subfamily. [4Fe-4S] cluster is required as a cofactor.

The protein resides in the cytoplasm. The enzyme catalyses iminosuccinate + dihydroxyacetone phosphate = quinolinate + phosphate + 2 H2O + H(+). Its pathway is cofactor biosynthesis; NAD(+) biosynthesis; quinolinate from iminoaspartate: step 1/1. Catalyzes the condensation of iminoaspartate with dihydroxyacetone phosphate to form quinolinate. In Methanocaldococcus jannaschii (strain ATCC 43067 / DSM 2661 / JAL-1 / JCM 10045 / NBRC 100440) (Methanococcus jannaschii), this protein is Quinolinate synthase.